Consider the following 164-residue polypeptide: General odorant-binding protein 1 (164 aa).

Positions 1-18 are cleaved as a signal peptide; that stretch reads MWKLVVVLTVNLLQGALT. 3 disulfide bridges follow: Cys-37–Cys-72, Cys-68–Cys-126, and Cys-115–Cys-135.

Belongs to the PBP/GOBP family. As to quaternary structure, homodimer. As to expression, antenna.

In terms of biological role, present in the aqueous fluid surrounding olfactory sensory dendrites and are thought to aid in the capture and transport of hydrophobic odorants into and through this fluid. This chain is General odorant-binding protein 1, found in Bombyx mori (Silk moth).